The chain runs to 1325 residues: Bile salt export pump (1325 aa).

Residues 1 to 62 (MSDAVILRSV…FSSTTDIWLM (62 aa)) are Cytoplasmic-facing. Residues 62-385 (MFVGSLCAFL…ASSCLEAFAT (324 aa)) form the ABC transmembrane type-1 1 domain. A helical transmembrane segment spans residues 63–83 (FVGSLCAFLHGLSHPGVLLIF). The Extracellular segment spans residues 84 to 147 (GTMTDVFIAY…MIKFASYYAG (64 aa)). Asparagine 109, asparagine 116, asparagine 122, and asparagine 125 each carry an N-linked (GlcNAc...) asparagine glycan. Residues 148 to 168 (IALLVLITGYIQICFWVIAAA) form a helical membrane-spanning segment. At 169 to 240 (RQIQKMRKIS…FLLGFYQGWK (72 aa)) the chain is on the cytoplasmic side. The chain crosses the membrane as a helical span at residues 241 to 261 (LTLVIISVSPLIGIGAAIIGL). Residues 262 to 319 (SVSKFTDYELKAYAKAGSVADEVISSMRTVAAFGGEKKEVERYEKNLVFAQRWGIRKG) lie on the Extracellular side of the membrane. The helical transmembrane segment at 320-340 (IVMGFFTGFMWCLIFLCYALA) threads the bilayer. At 341-353 (FWYGSKLVLEDGE) the chain is on the cytoplasmic side. Residues 354-374 (YTAGTLVQIFLSILLGALNLG) traverse the membrane as a helical segment. 3 N-linked (GlcNAc...) asparagine glycosylation sites follow: asparagine 375, asparagine 424, and asparagine 440. Residues 375–759 (NASSCLEAFA…KFNAPEWPYM (385 aa)) lie on the Extracellular side of the membrane. An ABC transporter 1 domain is found at 420 to 656 (IEFHNVTFHY…KGVYFTLVTL (237 aa)). An ATP-binding site is contributed by 455 to 462 (GSSGSGKS). Asparagine 591 carries N-linked (GlcNAc...) asparagine glycosylation. Residues 759-1047 (MLFGAVGAAV…ASSYTPSYAK (289 aa)) enclose the ABC transmembrane type-1 2 domain. The chain crosses the membrane as a helical span at residues 760–780 (LFGAVGAAVNGSVTPLYAFLF). The Cytoplasmic portion of the chain corresponds to 781 to 798 (SQILGTFSLPDKEEQRSQ). Residues 799 to 819 (INGVCLLFVAVGCVSLCTQFL) traverse the membrane as a helical segment. The Extracellular segment spans residues 820–894 (QGYAFAKSGE…NSFTNVTVAM (75 aa)). The N-linked (GlcNAc...) asparagine glycan is linked to asparagine 889. A helical transmembrane segment spans residues 895–915 (IIAFFFSWKLSLVIMCFFPFL). The Cytoplasmic portion of the chain corresponds to 916–983 (ALSGALQTRM…PFKTAFRKAN (68 aa)). The helical transmembrane segment at 984 to 1004 (VYGFCFGFSQCIVFVANSASY) threads the bilayer. Residues 1005-1014 (RYGGYLIPNE) are Extracellular-facing. A helical transmembrane segment spans residues 1015 to 1035 (GLHFSYVFRVISSVVLSATAL). The Cytoplasmic portion of the chain corresponds to 1036-1325 (GRASSYTPSY…KLVTTGAPIS (290 aa)). Residues 1082-1320 (VDFVDCKFTY…KGAYYKLVTT (239 aa)) form the ABC transporter 2 domain. An ATP-binding site is contributed by 1117-1124 (GSSGCGKS).

This sequence belongs to the ABC transporter superfamily. ABCB family. Multidrug resistance exporter (TC 3.A.1.201) subfamily. As to quaternary structure, interacts with HAX1. Interacts with the adapter protein complex 2 (AP-2) throught AP2A2 or AP2A1; this interaction regulates cell membrane expression of ABCB11 through its internalization in a clathrin-dependent manner and its subsequent degradation. Post-translationally, N-glycosylated. Ubiquitinated; short-chain ubiquitination regulates cell-Surface expression of ABCB11. In terms of tissue distribution, liver.

It is found in the apical cell membrane. It localises to the recycling endosome membrane. Its subcellular location is the endosome. The protein localises to the cell membrane. The catalysed reaction is cholate(in) + ATP + H2O = cholate(out) + ADP + phosphate + H(+). It catalyses the reaction taurocholate(in) + ATP + H2O = taurocholate(out) + ADP + phosphate + H(+). The enzyme catalyses glycocholate(in) + ATP + H2O = glycocholate(out) + ADP + phosphate + H(+). It carries out the reaction glycochenodeoxycholate(in) + ATP + H2O = glycochenodeoxycholate(out) + ADP + phosphate + H(+). The catalysed reaction is taurochenodeoxycholate(in) + ATP + H2O = taurochenodeoxycholate(out) + ADP + phosphate + H(+). It catalyses the reaction glycoursodeoxycholate(in) + ATP + H2O = glycoursodeoxycholate(out) + ADP + phosphate + H(+). The enzyme catalyses tauroursodeoxycholate(in) + ATP + H2O = tauroursodeoxycholate(out) + ADP + phosphate + H(+). It carries out the reaction taurodeoxycholate(in) + ATP + H2O = taurodeoxycholate(out) + ADP + phosphate + H(+). The catalysed reaction is taurolithocholate 3-sulfate(in) + ATP + H2O = taurolithocholate 3-sulfate(out) + ADP + phosphate + H(+). It catalyses the reaction pravastatin(in) + ATP + H2O = pravastatin(out) + ADP + phosphate + H(+). Its activity is regulated as follows. The uptake of taurocholate is inhibited by taurolithocholate sulfate with an IC(50) of 9 uM. Pravastatin competitively inhibits the transport of taurocholic acid. Cyclosporin A, glibenclamide, rifampicin and troglitazonestrongly competitively inhibit the transport activity of taurocholate. The canalicular transport activity of taurocholate is strongly dependent on canalicular membrane cholesterol content. The uptake of taurocholate is increased by short- and medium-chain fatty acids. Cholesterol increases transport capacity of taurocholate without affecting the affinity for the substrate. Functionally, catalyzes the transport of the major hydrophobic bile salts, such as taurine and glycine-conjugated cholic acid across the canalicular membrane of hepatocytes in an ATP-dependent manner, therefore participates in hepatic bile acid homeostasis and consequently to lipid homeostasis through regulation of biliary lipid secretion in a bile salts dependent manner. Transports taurine-conjugated bile salts more rapidly than glycine-conjugated bile salts. Also transports non-bile acid compounds, such as pravastatin and fexofenadine in an ATP-dependent manner and may be involved in their biliary excretion. The protein is Bile salt export pump of Canis lupus familiaris (Dog).